The chain runs to 345 residues: NADH-quinone oxidoreductase subunit H (345 aa).

A run of 8 helical transmembrane segments spans residues 15–35, 82–102, 115–135, 161–181, 190–210, 240–262, 278–298, and 309–329; these read MLLQGLAVIAFVMGSLIFMVY, FVYFLAPFLSMMLALFAFVVI, VGILFIFAASSLEVYGVIMGG, LGLIIIGIIISTGSMNLTAIV, LLNWYWLPHLPMVVLFFVSAL, YLLFMAGEYIAMYLMCALLSLLF, WWMVIKMWFWFYMFAMVKAIV, and IGWKVFLPLSLGWVVLVAILA.

The protein belongs to the complex I subunit 1 family. NDH-1 is composed of at least 14 different subunits, Nqo1 to Nqo14. The complex has a L-shaped structure, with the hydrophobic arm (subunits Nqo7, Nqo8, Nqo10 to Nqo14) embedded in the inner membrane and the hydrophilic peripheral arm (subunits Nqo1 to Nqo6, Nqo9) protruding into the bacterial cytoplasm. The hydrophilic domain contains all the redox centers. NADH-quinone oxidoreductase forms a supercomplex with ubiquinol-cytochrome c reductase complex (complex III or cytochrome b-c1 complex) and cytochrome c oxidase (complex IV), which stabilizes the NADH-quinone oxidoreductase complex.

Its subcellular location is the cell inner membrane. It catalyses the reaction a quinone + NADH + 5 H(+)(in) = a quinol + NAD(+) + 4 H(+)(out). Its function is as follows. NDH-1 shuttles electrons from NADH, via FMN and iron-sulfur (Fe-S) centers, to quinones in the respiratory chain. The immediate electron acceptor for the enzyme in this species is believed to be ubiquinone. Couples the redox reaction to proton translocation (for every two electrons transferred, four hydrogen ions are translocated across the cytoplasmic membrane), and thus conserves the redox energy in a proton gradient. This subunit may bind ubiquinone. The protein is NADH-quinone oxidoreductase subunit H of Paracoccus denitrificans (strain Pd 1222).